The sequence spans 841 residues: Homeobox-leucine zipper protein ATHB-9 (841 aa).

Positions 1-18 (MMAHHSMDDRDSPDKGFD) are enriched in basic and acidic residues. Positions 1-21 (MMAHHSMDDRDSPDKGFDSGK) are disordered. The homeobox DNA-binding region spans 18 to 81 (DSGKYVRYTP…NRRCREKQRK (64 aa)). Positions 85–118 (RLQTVNRKLSAMNKLLMEENDRLQKQVSNLVYEN) form a coiled coil. Disordered stretches follow at residues 140 to 162 (VVVS…RDVN) and 602 to 630 (DQKT…TKTD). Residues 145-155 (QQRQQQNPTHQ) show a composition bias toward low complexity. An START domain is found at 160–388 (DVNNPANLLS…IAQETSGEVQ (229 aa)). A compositionally biased stretch (polar residues) spans 603–614 (QKTNPNDHQSAS).

It belongs to the HD-ZIP homeobox family. Class III subfamily. As to quaternary structure, binds DNA as homodimer. Interacts with ESR1 and ESR2. Interacts with ZPR3.

The protein localises to the nucleus. Its function is as follows. Probable transcription factor involved in the determination of adaxial-abaxial polarity in ovule primordium. Specifies adaxial leaf fates. Binds to the DNA sequence 5'-GTAAT[GC]ATTAC-3'. The polypeptide is Homeobox-leucine zipper protein ATHB-9 (ATHB-9) (Arabidopsis thaliana (Mouse-ear cress)).